Reading from the N-terminus, the 131-residue chain is Profilin-11 (131 aa).

Cys13 and Cys115 form a disulfide bridge. An Involved in PIP2 interaction motif is present at residues 81–97 (AVIRGKKGSGGITVKKT). Phosphothreonine is present on Thr111.

The protein belongs to the profilin family. As to quaternary structure, occurs in many kinds of cells as a complex with monomeric actin in a 1:1 ratio. Post-translationally, phosphorylated by MAP kinases.

The protein resides in the cytoplasm. It localises to the cytoskeleton. Its function is as follows. Binds to actin and affects the structure of the cytoskeleton. At high concentrations, profilin prevents the polymerization of actin, whereas it enhances it at low concentrations. The sequence is that of Profilin-11 from Zea mays (Maize).